A 112-amino-acid chain; its full sequence is Putative pterin-4-alpha-carbinolamine dehydratase (112 aa).

Belongs to the pterin-4-alpha-carbinolamine dehydratase family.

It carries out the reaction (4aS,6R)-4a-hydroxy-L-erythro-5,6,7,8-tetrahydrobiopterin = (6R)-L-erythro-6,7-dihydrobiopterin + H2O. The sequence is that of Putative pterin-4-alpha-carbinolamine dehydratase from Shewanella oneidensis (strain ATCC 700550 / JCM 31522 / CIP 106686 / LMG 19005 / NCIMB 14063 / MR-1).